A 520-amino-acid chain; its full sequence is Probable cytosol aminopeptidase (520 aa).

Residues lysine 232 and aspartate 237 each coordinate Mn(2+). The active site involves lysine 244. Mn(2+) contacts are provided by aspartate 255, aspartate 314, and glutamate 316. Arginine 318 is an active-site residue. The disordered stretch occupies residues 488–520; that stretch reads KAKKSTAKKATTKKTTTRKTASKTKSTKSKARK.

This sequence belongs to the peptidase M17 family. Mn(2+) serves as cofactor.

It localises to the cytoplasm. The catalysed reaction is Release of an N-terminal amino acid, Xaa-|-Yaa-, in which Xaa is preferably Leu, but may be other amino acids including Pro although not Arg or Lys, and Yaa may be Pro. Amino acid amides and methyl esters are also readily hydrolyzed, but rates on arylamides are exceedingly low.. The enzyme catalyses Release of an N-terminal amino acid, preferentially leucine, but not glutamic or aspartic acids.. Functionally, presumably involved in the processing and regular turnover of intracellular proteins. Catalyzes the removal of unsubstituted N-terminal amino acids from various peptides. The protein is Probable cytosol aminopeptidase (pepA) of Metamycoplasma salivarium (Mycoplasma salivarium).